A 154-amino-acid chain; its full sequence is Aspartate carbamoyltransferase regulatory chain (154 aa).

Residues Cys-110, Cys-115, Cys-136, and Cys-139 each coordinate Zn(2+).

This sequence belongs to the PyrI family. In terms of assembly, contains catalytic and regulatory chains. Requires Zn(2+) as cofactor.

Involved in allosteric regulation of aspartate carbamoyltransferase. The sequence is that of Aspartate carbamoyltransferase regulatory chain from Halobacterium salinarum (strain ATCC 700922 / JCM 11081 / NRC-1) (Halobacterium halobium).